The chain runs to 207 residues: Guanylate kinase (207 aa).

A Guanylate kinase-like domain is found at 4–184 (GTLYIVSAPS…ALTDLKTIIR (181 aa)). 11–18 (APSGAGKS) serves as a coordination point for ATP.

The protein belongs to the guanylate kinase family.

It localises to the cytoplasm. It carries out the reaction GMP + ATP = GDP + ADP. In terms of biological role, essential for recycling GMP and indirectly, cGMP. The chain is Guanylate kinase from Escherichia coli O6:K15:H31 (strain 536 / UPEC).